The sequence spans 151 residues: Large ribosomal subunit protein uL22 (151 aa).

The interval 1–25 (MARINYSVKEDPETTSKAMGSELHI) is disordered.

This sequence belongs to the universal ribosomal protein uL22 family. As to quaternary structure, part of the 50S ribosomal subunit.

Its function is as follows. This protein binds specifically to 23S rRNA. It makes multiple contacts with different domains of the 23S rRNA in the assembled 50S subunit and ribosome. The globular domain of the protein is located near the polypeptide exit tunnel on the outside of the subunit, while an extended beta-hairpin is found that lines the wall of the exit tunnel in the center of the 70S ribosome. This Methanosarcina barkeri (strain Fusaro / DSM 804) protein is Large ribosomal subunit protein uL22.